The chain runs to 254 residues: Bowman-Birk type bran trypsin inhibitor (254 aa).

The N-terminal stretch at 1 to 22 (MSNTTMATSTILLFLLAGLAAA) is a signal peptide. A propeptide spanning residues 23-118 (HGDGDTTIRL…KCTAALDGLS (96 aa)) is cleaved from the precursor. Repeats lie at residues 46-120 (KPWD…LSME), 121-187 (RPWK…FCTP), and 188-251 (RPWG…CKPR). Intrachain disulfides connect cysteine 125-cysteine 185, cysteine 126-cysteine 143, cysteine 152-cysteine 159, cysteine 156-cysteine 172, cysteine 193-cysteine 248, cysteine 194-cysteine 209, cysteine 199-cysteine 207, cysteine 216-cysteine 223, and cysteine 220-cysteine 236. A propeptide spanning residues 252–254 (AEN) is cleaved from the precursor.

This sequence belongs to the Bowman-Birk serine protease inhibitor family.

This chain is Bowman-Birk type bran trypsin inhibitor (RBBI3.3), found in Oryza sativa subsp. japonica (Rice).